Consider the following 193-residue polypeptide: Probable DNA-directed RNA polymerase subunit delta (193 aa).

Positions 14–83 constitute an HTH HARE-type domain; sequence LSMIEVARAI…GENKWGLRSW (70 aa). Composition is skewed to acidic residues over residues 117–134 and 142–193; these read GDDD…DEDN and EYDD…VVDE. The tract at residues 117–193 is disordered; the sequence is GDDDAIDYGH…EYSDEEVVDE (77 aa).

It belongs to the RpoE family. As to quaternary structure, RNAP is composed of a core of 2 alpha, a beta and a beta' subunits. The core is associated with a delta subunit and one of several sigma factors.

Functionally, participates in both the initiation and recycling phases of transcription. In the presence of the delta subunit, RNAP displays an increased specificity of transcription, a decreased affinity for nucleic acids, and an increased efficiency of RNA synthesis because of enhanced recycling. The chain is Probable DNA-directed RNA polymerase subunit delta from Streptococcus suis (strain 05ZYH33).